The primary structure comprises 444 residues: Phosphoribosylamine--glycine ligase (444 aa).

Residues 109-324 (RNLFKKYNIK…FLEVCEAIVN (216 aa)) form the ATP-grasp domain. Residue 140–202 (LTEKGIKAVV…EEKLEGVEFT (63 aa)) coordinates ATP. Gln-282, Glu-294, and Asn-296 together coordinate Mg(2+). 3 residues coordinate Mn(2+): Gln-282, Glu-294, and Asn-296.

Belongs to the GARS family. Mg(2+) is required as a cofactor. Requires Mn(2+) as cofactor.

The catalysed reaction is 5-phospho-beta-D-ribosylamine + glycine + ATP = N(1)-(5-phospho-beta-D-ribosyl)glycinamide + ADP + phosphate + H(+). Its pathway is purine metabolism; IMP biosynthesis via de novo pathway; N(1)-(5-phospho-D-ribosyl)glycinamide from 5-phospho-alpha-D-ribose 1-diphosphate: step 2/2. The sequence is that of Phosphoribosylamine--glycine ligase from Methanocaldococcus jannaschii (strain ATCC 43067 / DSM 2661 / JAL-1 / JCM 10045 / NBRC 100440) (Methanococcus jannaschii).